Here is a 130-residue protein sequence, read N- to C-terminus: Methylglyoxal synthase (130 aa).

Residues 1–130 (MMTRPRIALI…AELSRVEAQP (130 aa)) form the MGS-like domain. Residues His12, Lys16, 38–41 (TGTT), and 58–59 (SG) each bind substrate. Asp64 functions as the Proton donor/acceptor in the catalytic mechanism. A substrate-binding site is contributed by His91.

Belongs to the methylglyoxal synthase family.

It catalyses the reaction dihydroxyacetone phosphate = methylglyoxal + phosphate. In terms of biological role, catalyzes the formation of methylglyoxal from dihydroxyacetone phosphate. In Cupriavidus pinatubonensis (strain JMP 134 / LMG 1197) (Cupriavidus necator (strain JMP 134)), this protein is Methylglyoxal synthase.